Here is a 410-residue protein sequence, read N- to C-terminus: Ribonucleoside-diphosphate reductase small chain (410 aa).

Polar residues predominate over residues 1 to 20; it reads MSVQTSPSKQVTSGIQNLNM. 2 disordered regions span residues 1-43 and 55-78; these read MSVQ…DEDL and NANK…ANEP. 2 stretches are compositionally biased toward basic and acidic residues: residues 23–43 and 55–65; these read PAKK…DEDL and NANKKAAEAKK. The Fe cation site is built by Asp-146, Glu-177, and His-180. Tyr-184 is an active-site residue. The Fe cation site is built by Glu-240, Glu-274, and His-277.

The protein belongs to the ribonucleoside diphosphate reductase small chain family. As to quaternary structure, heterodimer of a large and a small subunit. It depends on Fe cation as a cofactor.

It carries out the reaction a 2'-deoxyribonucleoside 5'-diphosphate + [thioredoxin]-disulfide + H2O = a ribonucleoside 5'-diphosphate + [thioredoxin]-dithiol. Provides the precursors necessary for DNA synthesis. Catalyzes the biosynthesis of deoxyribonucleotides from the corresponding ribonucleotides. This chain is Ribonucleoside-diphosphate reductase small chain (rnr-2), found in Neurospora crassa (strain ATCC 24698 / 74-OR23-1A / CBS 708.71 / DSM 1257 / FGSC 987).